Consider the following 32-residue polypeptide: Cytochrome b6-f complex subunit 7 (32 aa).

Residues 5–25 traverse the membrane as a helical segment; it reads IFGTAAIFWVLIPIGLVGGAL.

Belongs to the PetM family. In terms of assembly, the 4 large subunits of the cytochrome b6-f complex are cytochrome b6, subunit IV (17 kDa polypeptide, PetD), cytochrome f and the Rieske protein, while the 4 small subunits are PetG, PetL, PetM and PetN. The complex functions as a dimer.

The protein localises to the cellular thylakoid membrane. Component of the cytochrome b6-f complex, which mediates electron transfer between photosystem II (PSII) and photosystem I (PSI), cyclic electron flow around PSI, and state transitions. This is Cytochrome b6-f complex subunit 7 from Synechococcus sp. (strain CC9902).